An 808-amino-acid polypeptide reads, in one-letter code: Protein translocase subunit SecA 2 (808 aa).

ATP contacts are provided by residues glutamine 124, 142 to 146 (GEGKT), and aspartate 535.

It belongs to the SecA family. As to quaternary structure, monomer and homodimer. Part of the essential Sec protein translocation apparatus which comprises SecA, SecYEG and auxiliary proteins SecDF. Other proteins may also be involved.

Its subcellular location is the cell membrane. The protein resides in the cytoplasm. The catalysed reaction is ATP + H2O + cellular proteinSide 1 = ADP + phosphate + cellular proteinSide 2.. Its function is as follows. Part of the Sec protein translocase complex. Interacts with the SecYEG preprotein conducting channel. Has a central role in coupling the hydrolysis of ATP to the transfer of proteins into and across the cell membrane, serving as an ATP-driven molecular motor driving the stepwise translocation of polypeptide chains across the membrane. The polypeptide is Protein translocase subunit SecA 2 (Mycobacterium bovis (strain BCG / Pasteur 1173P2)).